Consider the following 387-residue polypeptide: Succinate--CoA ligase [ADP-forming] subunit beta (387 aa).

ATP is bound by residues Lys-46, 53-55 (GRG), Glu-99, Cys-102, and Glu-107. 2 residues coordinate Mg(2+): Asn-196 and Asp-210. Substrate contacts are provided by residues Asn-261 and 318–320 (GIV).

It belongs to the succinate/malate CoA ligase beta subunit family. Heterotetramer of two alpha and two beta subunits. It depends on Mg(2+) as a cofactor.

The catalysed reaction is succinate + ATP + CoA = succinyl-CoA + ADP + phosphate. The enzyme catalyses GTP + succinate + CoA = succinyl-CoA + GDP + phosphate. Its pathway is carbohydrate metabolism; tricarboxylic acid cycle; succinate from succinyl-CoA (ligase route): step 1/1. Succinyl-CoA synthetase functions in the citric acid cycle (TCA), coupling the hydrolysis of succinyl-CoA to the synthesis of either ATP or GTP and thus represents the only step of substrate-level phosphorylation in the TCA. The beta subunit provides nucleotide specificity of the enzyme and binds the substrate succinate, while the binding sites for coenzyme A and phosphate are found in the alpha subunit. This is Succinate--CoA ligase [ADP-forming] subunit beta from Campylobacter hominis (strain ATCC BAA-381 / DSM 21671 / CCUG 45161 / LMG 19568 / NCTC 13146 / CH001A).